Here is a 309-residue protein sequence, read N- to C-terminus: NAD kinase (309 aa).

The Proton acceptor role is filled by aspartate 89. NAD(+)-binding positions include 89-90 (DG), 163-164 (NE), histidine 174, arginine 191, aspartate 193, and 204-209 (TAYALS).

It belongs to the NAD kinase family. A divalent metal cation serves as cofactor.

Its subcellular location is the cytoplasm. The catalysed reaction is NAD(+) + ATP = ADP + NADP(+) + H(+). In terms of biological role, involved in the regulation of the intracellular balance of NAD and NADP, and is a key enzyme in the biosynthesis of NADP. Catalyzes specifically the phosphorylation on 2'-hydroxyl of the adenosine moiety of NAD to yield NADP. This is NAD kinase from Shewanella baltica (strain OS155 / ATCC BAA-1091).